A 333-amino-acid chain; its full sequence is Meiotic drive suppressor wtf9 (333 aa).

Residues 1-69 form a disordered region; that stretch reads MKNNYTSLKS…ENHSSGTTDN (69 aa). Over residues 19–30 the composition is skewed to basic and acidic residues; sequence KTDHEIDLEKGP. The next 4 helical transmembrane spans lie at 73–95, 108–130, 174–191, and 204–226; these read LLIK…VCYL, VEWT…LTYF, WVVI…TLFL, and LICS…RLPF.

The protein belongs to the WTF family. As to quaternary structure, homomer. Interacts with other proteins that exhibit high sequence similarity.

The protein localises to the spore membrane. It localises to the vacuole membrane. Functionally, acts as a suppressor component of the dual wtf meiotic drive system, and can suppress but not confer meiotic drive by compatible poisons. Wtf meiotic drive systems promote unequal transmission of alleles from the parental zygote to progeny spores by encoding a poison and an antidote from the same locus; the poison is trans-acting and forms toxic aggregates in all spores within an ascus, wherease the antidote is spore-specific and targets aggregates for degradation by the vacuole. Meiotic drive by wtf systems therefore lead to poisoning of all progeny that do not inherit the dual poison/antidote allele, or express a compatible antidote. The protein is Meiotic drive suppressor wtf9 of Schizosaccharomyces pombe (strain 972 / ATCC 24843) (Fission yeast).